Consider the following 505-residue polypeptide: Probable cytochrome P450 28a5 (505 aa).

Heme is bound at residue cysteine 450.

This sequence belongs to the cytochrome P450 family. Heme serves as cofactor.

The protein resides in the endoplasmic reticulum membrane. It is found in the microsome membrane. Functionally, may be involved in the metabolism of insect hormones and in the breakdown of synthetic insecticides. This chain is Probable cytochrome P450 28a5 (Cyp28a5), found in Drosophila melanogaster (Fruit fly).